A 519-amino-acid chain; its full sequence is 2-isopropylmalate synthase (519 aa).

The 263-residue stretch at valine 5–tyrosine 267 folds into the Pyruvate carboxyltransferase domain. Mn(2+)-binding residues include aspartate 14, histidine 202, histidine 204, and asparagine 238. Positions alanine 392 to lysine 519 are regulatory domain.

It belongs to the alpha-IPM synthase/homocitrate synthase family. LeuA type 1 subfamily. As to quaternary structure, homodimer. It depends on Mn(2+) as a cofactor.

The protein resides in the cytoplasm. It catalyses the reaction 3-methyl-2-oxobutanoate + acetyl-CoA + H2O = (2S)-2-isopropylmalate + CoA + H(+). Its pathway is amino-acid biosynthesis; L-leucine biosynthesis; L-leucine from 3-methyl-2-oxobutanoate: step 1/4. Catalyzes the condensation of the acetyl group of acetyl-CoA with 3-methyl-2-oxobutanoate (2-ketoisovalerate) to form 3-carboxy-3-hydroxy-4-methylpentanoate (2-isopropylmalate). This Blochmanniella floridana protein is 2-isopropylmalate synthase.